The following is a 179-amino-acid chain: Adenine phosphoribosyltransferase (179 aa).

Belongs to the purine/pyrimidine phosphoribosyltransferase family. As to quaternary structure, homodimer.

It is found in the cytoplasm. It catalyses the reaction AMP + diphosphate = 5-phospho-alpha-D-ribose 1-diphosphate + adenine. Its pathway is purine metabolism; AMP biosynthesis via salvage pathway; AMP from adenine: step 1/1. Its function is as follows. Catalyzes a salvage reaction resulting in the formation of AMP, that is energically less costly than de novo synthesis. The polypeptide is Adenine phosphoribosyltransferase (Nitrobacter hamburgensis (strain DSM 10229 / NCIMB 13809 / X14)).